The following is a 618-amino-acid chain: V-type proton ATPase catalytic subunit A (618 aa).

251–258 (GAFGCGKT) lines the ATP pocket.

The protein belongs to the ATPase alpha/beta chains family. As to quaternary structure, V-ATPase is a heteromultimeric enzyme composed of a peripheral catalytic V1 complex (main components: subunits A, B, C, D, E, and F) attached to an integral membrane V0 proton pore complex (main component: the proteolipid protein).

The enzyme catalyses ATP + H2O + 4 H(+)(in) = ADP + phosphate + 5 H(+)(out). Catalytic subunit of the peripheral V1 complex of vacuolar ATPase. V-ATPase vacuolar ATPase is responsible for acidifying a variety of intracellular compartments in eukaryotic cells. The sequence is that of V-type proton ATPase catalytic subunit A (vatA) from Dictyostelium discoideum (Social amoeba).